The chain runs to 486 residues: CREB-regulated transcription coactivator 1 homolog (486 aa).

The segment at 1–62 is disordered; that stretch reads MSNSNTPRKF…APMPIPQQGL (62 aa). Residues 9–23 show a composition bias toward basic and acidic residues; it reads KFSEKIAILERKQNE. The span at 34 to 52 shows a compositional bias: polar residues; it reads QVQSITHHPTDSSGSSTAT. At serine 76 the chain carries Phosphoserine; by AMPK. A disordered region spans residues 103 to 166; the sequence is PIQGHRSRSP…PPYNQPGQLV (64 aa). A compositionally biased stretch (pro residues) spans 144–160; the sequence is RTPPQHPQYTPYGPPYN. Serine 179 carries the phosphoserine; by AMPK modification. Disordered regions lie at residues 214–278, 327–417, and 460–486; these read SMPG…QSPN, FNQD…SNSP, and APPQ…MLQN. Composition is skewed to polar residues over residues 224 to 245, 387 to 402, and 461 to 475; these read PNSQ…QGSP, PESQ…QLDP, and PPQT…NNSF.

The protein belongs to the TORC family. As to quaternary structure, interacts with crh-1. Phosphorylated by AMPK at Ser-76 and Ser-179. Dephosphorylated by tax-6, the catalytic subunit of calcineurin. In terms of tissue distribution, expressed throughout the intestine and in head and tail neurons. Expressed in octopaminergic RIC neurons.

It is found in the nucleus. It localises to the cytoplasm. The protein localises to the cytosol. Transcriptional coactivator for crh-1, the homolog of vertebrate transcription factor CREB1. Regulates the transcription of metabolic genes and may have a role in mitochondrial dynamics and metabolism. Involved in modulation of lifespan. Through crh-1, counteracts the pro-lifespan-extension signals of AMPK both cell autonomously and, when expressed in neurons, at a systemic level, possibly using the catecholamine analog, octopamine, as a messenger. This Caenorhabditis elegans protein is CREB-regulated transcription coactivator 1 homolog.